The following is a 123-amino-acid chain: Small ribosomal subunit protein uS12 (123 aa).

3-methylthioaspartic acid is present on Asp89. Residues 101 to 123 (SLDTAGVKDRKQSRSKYGAKRPK) are disordered. Residues 113–123 (SRSKYGAKRPK) are compositionally biased toward basic residues.

Belongs to the universal ribosomal protein uS12 family. In terms of assembly, part of the 30S ribosomal subunit. Contacts proteins S8 and S17. May interact with IF1 in the 30S initiation complex.

In terms of biological role, with S4 and S5 plays an important role in translational accuracy. Interacts with and stabilizes bases of the 16S rRNA that are involved in tRNA selection in the A site and with the mRNA backbone. Located at the interface of the 30S and 50S subunits, it traverses the body of the 30S subunit contacting proteins on the other side and probably holding the rRNA structure together. The combined cluster of proteins S8, S12 and S17 appears to hold together the shoulder and platform of the 30S subunit. This is Small ribosomal subunit protein uS12 from Laribacter hongkongensis (strain HLHK9).